Consider the following 229-residue polypeptide: Uracil-DNA glycosylase (229 aa).

Catalysis depends on aspartate 64, which acts as the Proton acceptor.

Belongs to the uracil-DNA glycosylase (UDG) superfamily. UNG family.

It is found in the cytoplasm. It catalyses the reaction Hydrolyzes single-stranded DNA or mismatched double-stranded DNA and polynucleotides, releasing free uracil.. Functionally, excises uracil residues from the DNA which can arise as a result of misincorporation of dUMP residues by DNA polymerase or due to deamination of cytosine. The chain is Uracil-DNA glycosylase from Escherichia coli O7:K1 (strain IAI39 / ExPEC).